A 159-amino-acid polypeptide reads, in one-letter code: Late embryogenesis abundant protein 50 (159 aa).

2 consecutive SMP domains span residues 30–87 (TTLT…RNQK) and 96–151 (NLGD…YKLN).

It belongs to the LEA type SMP family.

Its subcellular location is the cytoplasm. The protein resides in the nucleus. Its function is as follows. LEA proteins are late embryonic proteins abundant in higher plant seed embryos. The function of those proteins is not known. This chain is Late embryogenesis abundant protein 50, found in Arabidopsis thaliana (Mouse-ear cress).